The chain runs to 372 residues: Glutamate 5-kinase (372 aa).

Residue Lys14 coordinates ATP. Substrate is bound by residues Ser54, Asp141, and Asn153. An ATP-binding site is contributed by 173–174 (TD). Residues 280–358 (RGTLTLDEGA…DEIEKLLGYV (79 aa)) enclose the PUA domain.

It belongs to the glutamate 5-kinase family.

It localises to the cytoplasm. It catalyses the reaction L-glutamate + ATP = L-glutamyl 5-phosphate + ADP. It participates in amino-acid biosynthesis; L-proline biosynthesis; L-glutamate 5-semialdehyde from L-glutamate: step 1/2. Functionally, catalyzes the transfer of a phosphate group to glutamate to form L-glutamate 5-phosphate. In Stutzerimonas stutzeri (strain A1501) (Pseudomonas stutzeri), this protein is Glutamate 5-kinase.